A 750-amino-acid chain; its full sequence is Glutamate carboxypeptidase 2 (750 aa).

Residues 1–19 (MWNLLHETDSAVATARRPR) lie on the Cytoplasmic side of the membrane. Position 10 is a phosphoserine (Ser10). The helical; Signal-anchor for type II membrane protein transmembrane segment at 20–43 (WLCAGALVLAGGFFLLGFLFGWFI) threads the bilayer. Topologically, residues 44 to 750 (KSSNEATNIT…AAAETLSEVA (707 aa)) are extracellular. N-linked (GlcNAc...) asparagine glycosylation is found at Asn51, Asn76, Asn121, Asn140, Asn153, and Asn195. Positions 210 and 257 each coordinate substrate. Residues Thr269 and Tyr272 each coordinate Ca(2+). Residues 274–587 (ANEYAYRRGI…QVRGGMVFEL (314 aa)) are NAALADase. A glycan (N-linked (GlcNAc...) asparagine) is linked at Asn336. Positions 377 and 387 each coordinate Zn(2+). Glu424 provides a ligand contact to substrate. Glu424 serves as the catalytic Nucleophile; for NAALADase activity. Glu425 contributes to the Zn(2+) binding site. The Ca(2+) site is built by Glu433 and Glu436. A Zn(2+)-binding site is contributed by Asp453. Asn459 and Asn476 each carry an N-linked (GlcNAc...) asparagine glycan. Substrate contacts are provided by residues 517-518 (SG), Asn519, 534-536 (RAR), Tyr552, and 552-553 (YH). His553 is a Zn(2+) binding site. Ser628 acts as the Charge relay system in catalysis. A glycan (N-linked (GlcNAc...) asparagine) is linked at Asn638. Residues Asp666 and His689 each act as charge relay system in the active site. 699–700 (KY) is a substrate binding site.

Belongs to the peptidase M28 family. M28B subfamily. In terms of assembly, homodimer. Zn(2+) serves as cofactor. The first two amino acids at the N-terminus of isoform PSMA' appear to be cleaved by limited proteolysis. In terms of processing, the N-terminus is blocked. As to expression, highly expressed in prostate epithelium. Detected in urinary bladder, kidney, testis, ovary, fallopian tube, breast, adrenal gland, liver, esophagus, stomach, small intestine, colon and brain (at protein level). Detected in the small intestine, brain, kidney, liver, spleen, colon, trachea, spinal cord and the capillary endothelium of a variety of tumors. Expressed specifically in jejunum brush border membranes. In the brain, highly expressed in the ventral striatum and brain stem. Also expressed in fetal liver and kidney. Isoform PSMA' is the most abundant form in normal prostate. Isoform PSMA-1 is the most abundant form in primary prostate tumors. Isoform PSMA-9 is specifically expressed in prostate cancer.

The protein resides in the cell membrane. Its subcellular location is the cytoplasm. It carries out the reaction Release of an unsubstituted, C-terminal glutamyl residue, typically from Ac-Asp-Glu or folylpoly-gamma-glutamates.. Its activity is regulated as follows. The NAALADase activity is inhibited by beta-NAAG, quisqualic acid, 2-(phosphonomethyl) pentanedioic acid (PMPA) and EDTA. Activated by cobalt. Functionally, has both folate hydrolase and N-acetylated-alpha-linked-acidic dipeptidase (NAALADase) activity. Has a preference for tri-alpha-glutamate peptides. In the intestine, required for the uptake of folate. In the brain, modulates excitatory neurotransmission through the hydrolysis of the neuropeptide, N-aceylaspartylglutamate (NAAG), thereby releasing glutamate. Involved in prostate tumor progression. Also exhibits a dipeptidyl-peptidase IV type activity. In vitro, cleaves Gly-Pro-AMC. The polypeptide is Glutamate carboxypeptidase 2 (Homo sapiens (Human)).